A 523-amino-acid chain; its full sequence is Probable aminopeptidase NPEPL1 (523 aa).

2 residues coordinate Zn(2+): K260 and D265. The active site involves K272. D283, D342, and E344 together coordinate Zn(2+). R346 is a catalytic residue.

The protein belongs to the peptidase M17 family. Zn(2+) is required as a cofactor. The cofactor is Mn(2+). As to expression, ubiquitously expressed.

Functionally, probably catalyzes the removal of unsubstituted N-terminal amino acids from various peptides. The sequence is that of Probable aminopeptidase NPEPL1 (NPEPL1) from Homo sapiens (Human).